We begin with the raw amino-acid sequence, 1029 residues long: Exportin-T (1029 aa).

It belongs to the exportin family.

It localises to the nucleus. The protein localises to the cytoplasm. Functionally, tRNA nucleus export receptor which facilitates tRNA translocation across the nuclear pore complex. Involved in pre-tRNA splicing, probably by affecting the interaction of pre-tRNA with splicing endonuclease. The chain is Exportin-T (los1) from Aspergillus clavatus (strain ATCC 1007 / CBS 513.65 / DSM 816 / NCTC 3887 / NRRL 1 / QM 1276 / 107).